Consider the following 202-residue polypeptide: Small ribosomal subunit protein uS3 (202 aa).

Residues 18–87 (LNEYLQRQLV…NPQIDVVEVP (70 aa)) enclose the KH type-2 domain.

Belongs to the universal ribosomal protein uS3 family. In terms of assembly, part of the 30S ribosomal subunit.

Binds the lower part of the 30S subunit head. The protein is Small ribosomal subunit protein uS3 of Thermofilum pendens (strain DSM 2475 / Hrk 5).